Consider the following 225-residue polypeptide: Uracil-DNA glycosylase (225 aa).

Aspartate 65 acts as the Proton acceptor in catalysis.

Belongs to the uracil-DNA glycosylase (UDG) superfamily. UNG family.

The protein localises to the cytoplasm. The catalysed reaction is Hydrolyzes single-stranded DNA or mismatched double-stranded DNA and polynucleotides, releasing free uracil.. Its function is as follows. Excises uracil residues from the DNA which can arise as a result of misincorporation of dUMP residues by DNA polymerase or due to deamination of cytosine. The chain is Uracil-DNA glycosylase from Clostridium botulinum (strain Alaska E43 / Type E3).